Here is a 602-residue protein sequence, read N- to C-terminus: Elongation factor 4 (602 aa).

The region spanning 6–188 is the tr-type G domain; it reads KYIRNFCIIA…AIIRRVPPPR (183 aa). GTP is bound by residues 18-23 and 135-138; these read DHGKST and NKID.

Belongs to the TRAFAC class translation factor GTPase superfamily. Classic translation factor GTPase family. LepA subfamily.

The protein resides in the cell membrane. The catalysed reaction is GTP + H2O = GDP + phosphate + H(+). Required for accurate and efficient protein synthesis under certain stress conditions. May act as a fidelity factor of the translation reaction, by catalyzing a one-codon backward translocation of tRNAs on improperly translocated ribosomes. Back-translocation proceeds from a post-translocation (POST) complex to a pre-translocation (PRE) complex, thus giving elongation factor G a second chance to translocate the tRNAs correctly. Binds to ribosomes in a GTP-dependent manner. This Moorella thermoacetica (strain ATCC 39073 / JCM 9320) protein is Elongation factor 4.